The primary structure comprises 121 residues: Copper transport protein CCH (121 aa).

The residue at position 2 (Ala-2) is an N-acetylalanine. Residues 2–65 (AQTVVLKVGM…TVSKTGKKTS (64 aa)) form the HMA domain. Cu cation is bound by residues Cys-13 and Cys-16. The segment at 70–121 (EAEAEPKAEADPKVETVTETKTEAETKTEAKVDAKADVEPKAAEAETKPSQV) is disordered. Residues 73–121 (AEPKAEADPKVETVTETKTEAETKTEAKVDAKADVEPKAAEAETKPSQV) show a composition bias toward basic and acidic residues.

It belongs to the ATX1 family. Cu cation serves as cofactor. Expressed in phloem (at protein level).

Its function is as follows. Involved in copper homeostasis. Can complement the yeast mutants atx1 and sod1. The chain is Copper transport protein CCH (CCH) from Arabidopsis thaliana (Mouse-ear cress).